The chain runs to 330 residues: Phospho-N-acetylmuramoyl-pentapeptide-transferase (330 aa).

Transmembrane regions (helical) follow at residues 3–23 (SVVLGAAVAFFVTVTLGSSFI), 49–69 (TPTMGGVLMLMGLVAGLAVVA), 71–91 (PNPATFSVLLIVAATAGVGLY), 111–131 (FLLLSLVVVLADVMALRYVGV), 145–165 (VLGPGVVGVGLFSVLMLFVIV), 179–199 (GLAAGAGGIALLTYTAIAFLE), 204–224 (LAIICGAMVGAIIGFLWYNSH), 228–248 (IFMGDTGSLAIGGVLSAAAIL), 256–276 (PVIGGLFVIVALSVMIQVVVF), and 307–327 (FWIVQSAFSALGFLMYYFFLY).

The protein belongs to the glycosyltransferase 4 family. MraY subfamily. It depends on Mg(2+) as a cofactor.

The protein localises to the cell membrane. It catalyses the reaction UDP-N-acetyl-alpha-D-muramoyl-L-alanyl-gamma-D-glutamyl-meso-2,6-diaminopimeloyl-D-alanyl-D-alanine + di-trans,octa-cis-undecaprenyl phosphate = di-trans,octa-cis-undecaprenyl diphospho-N-acetyl-alpha-D-muramoyl-L-alanyl-D-glutamyl-meso-2,6-diaminopimeloyl-D-alanyl-D-alanine + UMP. It participates in cell wall biogenesis; peptidoglycan biosynthesis. Its function is as follows. Catalyzes the initial step of the lipid cycle reactions in the biosynthesis of the cell wall peptidoglycan: transfers peptidoglycan precursor phospho-MurNAc-pentapeptide from UDP-MurNAc-pentapeptide onto the lipid carrier undecaprenyl phosphate, yielding undecaprenyl-pyrophosphoryl-MurNAc-pentapeptide, known as lipid I. This is Phospho-N-acetylmuramoyl-pentapeptide-transferase from Rubrobacter xylanophilus (strain DSM 9941 / JCM 11954 / NBRC 16129 / PRD-1).